The sequence spans 336 residues: Holliday junction branch migration complex subunit RuvB (336 aa).

Residues 1–182 form a large ATPase domain (RuvB-L) region; sequence MKERIVNLET…FGMSFRMQFY (182 aa). ATP contacts are provided by residues L21, R22, G63, K66, T67, S68, 129–131, R172, Y182, and R219; that span reads EDF. A Mg(2+)-binding site is contributed by T67. Positions 183–253 are small ATPAse domain (RuvB-S); the sequence is NPSELALIIK…ITLHALNELG (71 aa). The tract at residues 256–336 is head domain (RuvB-H); the sequence is ELGFDEADLA…IPTLNPQTLF (81 aa). DNA is bound by residues R310 and R315.

This sequence belongs to the RuvB family. Homohexamer. Forms an RuvA(8)-RuvB(12)-Holliday junction (HJ) complex. HJ DNA is sandwiched between 2 RuvA tetramers; dsDNA enters through RuvA and exits via RuvB. An RuvB hexamer assembles on each DNA strand where it exits the tetramer. Each RuvB hexamer is contacted by two RuvA subunits (via domain III) on 2 adjacent RuvB subunits; this complex drives branch migration. In the full resolvosome a probable DNA-RuvA(4)-RuvB(12)-RuvC(2) complex forms which resolves the HJ.

Its subcellular location is the cytoplasm. The enzyme catalyses ATP + H2O = ADP + phosphate + H(+). Its function is as follows. The RuvA-RuvB-RuvC complex processes Holliday junction (HJ) DNA during genetic recombination and DNA repair, while the RuvA-RuvB complex plays an important role in the rescue of blocked DNA replication forks via replication fork reversal (RFR). RuvA specifically binds to HJ cruciform DNA, conferring on it an open structure. The RuvB hexamer acts as an ATP-dependent pump, pulling dsDNA into and through the RuvAB complex. RuvB forms 2 homohexamers on either side of HJ DNA bound by 1 or 2 RuvA tetramers; 4 subunits per hexamer contact DNA at a time. Coordinated motions by a converter formed by DNA-disengaged RuvB subunits stimulates ATP hydrolysis and nucleotide exchange. Immobilization of the converter enables RuvB to convert the ATP-contained energy into a lever motion, pulling 2 nucleotides of DNA out of the RuvA tetramer per ATP hydrolyzed, thus driving DNA branch migration. The RuvB motors rotate together with the DNA substrate, which together with the progressing nucleotide cycle form the mechanistic basis for DNA recombination by continuous HJ branch migration. Branch migration allows RuvC to scan DNA until it finds its consensus sequence, where it cleaves and resolves cruciform DNA. This is Holliday junction branch migration complex subunit RuvB from Helicobacter pylori (strain ATCC 700392 / 26695) (Campylobacter pylori).